Consider the following 400-residue polypeptide: Glycine betaine/proline betaine transport system ATP-binding protein ProV (400 aa).

In terms of domain architecture, ABC transporter spans 29 to 265 (LSKEQILEKT…PANDYVRTFF (237 aa)). 61-68 (GLSGSGKS) lines the ATP pocket. 2 CBS domains span residues 280–341 (ARRS…GIEA) and 343–400 (LIDD…GNNG).

It belongs to the ABC transporter superfamily. In terms of assembly, the complex is composed of two ATP-binding proteins (ProV), two transmembrane proteins (ProW) and a solute-binding protein (ProX).

The protein localises to the cell inner membrane. In terms of biological role, part of the ProU ABC transporter complex involved in glycine betaine and proline betaine uptake. Probably responsible for energy coupling to the transport system. The protein is Glycine betaine/proline betaine transport system ATP-binding protein ProV of Salmonella typhimurium (strain LT2 / SGSC1412 / ATCC 700720).